Here is an 86-residue protein sequence, read N- to C-terminus: Mu-theraphotoxin-Hhn1c (86 aa).

Positions 1 to 21 (MKASMFLALAGLALLFVVCYA) are cleaved as a signal peptide. Residues 22 to 49 (SESEEKEFSNELLSSVLAVDDNSKGEER) constitute a propeptide that is removed on maturation. Cystine bridges form between Cys-51/Cys-66, Cys-58/Cys-73, and Cys-65/Cys-80. Isoleucine amide is present on Ile-84.

It belongs to the neurotoxin 10 (Hwtx-1) family. 22 (Htx-4) subfamily. Monomer. As to expression, expressed by the venom gland.

It localises to the secreted. In terms of biological role, neurotoxin. Selectively blocks neuronal tetrodotoxin-sensitive voltage-gated sodium channels (Nav). Does not affect tetrodotoxin-resistant voltage-gated sodium channels or calcium channels. The protein is Mu-theraphotoxin-Hhn1c of Cyriopagopus hainanus (Chinese bird spider).